The primary structure comprises 342 residues: N-acetyl-gamma-glutamyl-phosphate reductase (342 aa).

The active site involves cysteine 146.

The protein belongs to the NAGSA dehydrogenase family. Type 1 subfamily.

Its subcellular location is the cytoplasm. The catalysed reaction is N-acetyl-L-glutamate 5-semialdehyde + phosphate + NADP(+) = N-acetyl-L-glutamyl 5-phosphate + NADPH + H(+). The protein operates within amino-acid biosynthesis; L-arginine biosynthesis; N(2)-acetyl-L-ornithine from L-glutamate: step 3/4. Its function is as follows. Catalyzes the NADPH-dependent reduction of N-acetyl-5-glutamyl phosphate to yield N-acetyl-L-glutamate 5-semialdehyde. This Saccharopolyspora erythraea (strain ATCC 11635 / DSM 40517 / JCM 4748 / NBRC 13426 / NCIMB 8594 / NRRL 2338) protein is N-acetyl-gamma-glutamyl-phosphate reductase.